The primary structure comprises 275 residues: 3-methyl-2-oxobutanoate hydroxymethyltransferase (275 aa).

Asp-44 and Asp-83 together coordinate Mg(2+). 3-methyl-2-oxobutanoate is bound by residues 44–45 (DS), Asp-83, and Lys-113. Mg(2+) is bound at residue Glu-115. Glu-182 functions as the Proton acceptor in the catalytic mechanism.

It belongs to the PanB family. Homodecamer; pentamer of dimers. Requires Mg(2+) as cofactor.

The protein resides in the cytoplasm. It catalyses the reaction 3-methyl-2-oxobutanoate + (6R)-5,10-methylene-5,6,7,8-tetrahydrofolate + H2O = 2-dehydropantoate + (6S)-5,6,7,8-tetrahydrofolate. It functions in the pathway cofactor biosynthesis; (R)-pantothenate biosynthesis; (R)-pantoate from 3-methyl-2-oxobutanoate: step 1/2. In terms of biological role, catalyzes the reversible reaction in which hydroxymethyl group from 5,10-methylenetetrahydrofolate is transferred onto alpha-ketoisovalerate to form ketopantoate. This chain is 3-methyl-2-oxobutanoate hydroxymethyltransferase, found in Clostridioides difficile (strain 630) (Peptoclostridium difficile).